Consider the following 275-residue polypeptide: WIMGHMVNAIEQVDEFLNLGANAIEFDIDFDENGIAKYTHHGIPCDCGRLCTKSAVFTEYLDYVRQVTSPGDPKFRKELVLLALDLKLQRISSEKAYAAGVDVATKLLDHYWKRGWNGGRAYILLNIPLVEDYEFIKGFKDTLRKEGHEQYNAKVGINFTGNEDLDEIRKVLEKLGEDEHIWQADGITSCFPRGTDRLEKALEKRDTPGYKYISKVYAWTLVRSSIMRRSLRLDVDGVMSNYPDRVVGVLQEKEFANKFRLATYADNPWEKFMRI.

Residue His-5 is part of the active site. Residues Glu-25 and Asp-27 each coordinate Mg(2+). The active-site Nucleophile is His-41. 2 disulfide bridges follow: Cys-45/Cys-51 and Cys-47/Cys-190. Asp-85 contributes to the Mg(2+) binding site.

The protein belongs to the arthropod phospholipase D family. Class II subfamily. It depends on Mg(2+) as a cofactor. In terms of tissue distribution, expressed by the venom gland.

The protein localises to the secreted. It carries out the reaction an N-(acyl)-sphingosylphosphocholine = an N-(acyl)-sphingosyl-1,3-cyclic phosphate + choline. The enzyme catalyses an N-(acyl)-sphingosylphosphoethanolamine = an N-(acyl)-sphingosyl-1,3-cyclic phosphate + ethanolamine. The catalysed reaction is a 1-acyl-sn-glycero-3-phosphocholine = a 1-acyl-sn-glycero-2,3-cyclic phosphate + choline. It catalyses the reaction a 1-acyl-sn-glycero-3-phosphoethanolamine = a 1-acyl-sn-glycero-2,3-cyclic phosphate + ethanolamine. In terms of biological role, dermonecrotic toxins cleave the phosphodiester linkage between the phosphate and headgroup of certain phospholipids (sphingolipid and lysolipid substrates), forming an alcohol (often choline) and a cyclic phosphate. This toxin acts on sphingomyelin (SM). It may also act on ceramide phosphoethanolamine (CPE), lysophosphatidylcholine (LPC) and lysophosphatidylethanolamine (LPE), but not on lysophosphatidylserine (LPS), and lysophosphatidylglycerol (LPG). It acts by transphosphatidylation, releasing exclusively cyclic phosphate products as second products. Induces dermonecrosis, hemolysis, increased vascular permeability, edema, inflammatory response, and platelet aggregation. This chain is Dermonecrotic toxin SpaSicTox-betaIIA3, found in Sicarius patagonicus (Six-eyed sand spider).